Consider the following 640-residue polypeptide: Chaperone protein HtpG (640 aa).

Positions 1–352 (MTEQTATQNY…SADLPLNVSR (352 aa)) are a; substrate-binding. The interval 353 to 571 (ELLQESRDVK…DGELSPQLIR (219 aa)) is b. The interval 572-640 (MLKQAGQAVP…VKRINSLLLK (69 aa)) is c.

It belongs to the heat shock protein 90 family. As to quaternary structure, homodimer.

The protein localises to the cytoplasm. Its function is as follows. Molecular chaperone. Has ATPase activity. This Acinetobacter baylyi (strain ATCC 33305 / BD413 / ADP1) protein is Chaperone protein HtpG.